The chain runs to 81 residues: Gamma-conotoxin-like TeA53 (81 aa).

The signal sequence occupies residues 1–19; it reads MQKLTILLLVAAVLMSTQA. The propeptide occupies 20 to 42; that stretch reads LNQEQHQRAKINLLSKRKPPAER. 3 disulfides stabilise this stretch: cysteine 49-cysteine 63, cysteine 56-cysteine 67, and cysteine 62-cysteine 72.

This sequence belongs to the conotoxin O2 superfamily. In terms of tissue distribution, expressed by the venom duct.

Its subcellular location is the secreted. In terms of biological role, gamma-conotoxins may act on voltage-gated non-specific cation pacemaker channels (HCN). The chain is Gamma-conotoxin-like TeA53 from Conus textile (Cloth-of-gold cone).